An 886-amino-acid polypeptide reads, in one-letter code: Leucine-rich repeat-containing protein sog2 (886 aa).

LRR repeat units follow at residues 28 to 49, 53 to 74, 76 to 97, 99 to 120, 122 to 143, and 145 to 166; these read NALTLDLSHLNLRELPYEQLER, RIARLALGHNFIKSIGPEILKF, RLRYLNIRSNVLREFPESLCRL, SLEILDISRNKIKQLPESFGAL, NLKVLSISKNRLFELPTYIAHM, and NLEILKIENNHIVFPPPHIANN. Disordered stretches follow at residues 236-288, 301-364, 394-431, and 455-483; these read SPGM…THPP, SPRQ…ASPI, PTQLSASAKTSAISLPEVAKKERNRSNSTNDDYSSTRL, and RIFAQDPHPSPRLKKEETHENGSNLTNDS. Positions 243–277 are enriched in polar residues; sequence VTPSPHSHSPAGHQQSTPKSTLSKTNENSEGTLYD. A Phosphoserine modification is found at Ser-301. Composition is skewed to polar residues over residues 312-347, 394-406, and 419-431; these read SLATGLNSPSVSKPPSSATGPLYHSPQSSLTNSSVA, PTQLSASAKTSAI, and SNSTNDDYSSTRL. Position 464 is a phosphoserine (Ser-464).

The protein localises to the cytoplasm. It is found in the nucleus. In Schizosaccharomyces pombe (strain 972 / ATCC 24843) (Fission yeast), this protein is Leucine-rich repeat-containing protein sog2.